The following is a 712-amino-acid chain: Zinc finger and BTB domain-containing protein 39 (712 aa).

Positions 30 to 96 (CDVTIVVGSR…VYTSELFTDL (67 aa)) constitute a BTB domain. Disordered stretches follow at residues 129–162 (ARAK…LRGG), 176–224 (SDAG…IPSM), and 236–260 (GIQT…KNSF). Residues 134 to 147 (LTSTSESHSGTLSC) show a composition bias toward polar residues. Lys-183 participates in a covalent cross-link: Glycyl lysine isopeptide (Lys-Gly) (interchain with G-Cter in SUMO2). The C2H2-type 1 zinc-finger motif lies at 372–394 (GNCKVCETHFQDRNSRVTHVLSH). The C2H2-type 2; atypical zinc finger occupies 400-422 (FSCDMCETKFFTQWQLTLHRRDG). A Glycyl lysine isopeptide (Lys-Gly) (interchain with G-Cter in SUMO2) cross-link involves residue Lys-439. The C2H2-type 3; atypical zinc finger occupies 480–502 (QACSVCDQRHLNLCSLMWHTLSH). 4 consecutive C2H2-type zinc fingers follow at residues 508-530 (FSCS…MAVH), 538-560 (FHCR…VSQH), 605-627 (YSCK…RRIH), and 633-655 (YQCK…LKTH). The C2H2-type 8; atypical zinc finger occupies 661-683 (YRCTVCGHYSSTLNLMSKHVGVH).

The protein belongs to the krueppel C2H2-type zinc-finger protein family.

Its subcellular location is the nucleus. Its function is as follows. May be involved in transcriptional regulation. This Homo sapiens (Human) protein is Zinc finger and BTB domain-containing protein 39 (ZBTB39).